The sequence spans 184 residues: Large ribosomal subunit protein uL6 (184 aa).

This sequence belongs to the universal ribosomal protein uL6 family. In terms of assembly, part of the 50S ribosomal subunit.

Its function is as follows. This protein binds to the 23S rRNA, and is important in its secondary structure. It is located near the subunit interface in the base of the L7/L12 stalk, and near the tRNA binding site of the peptidyltransferase center. In Mycoplasma genitalium (strain ATCC 33530 / DSM 19775 / NCTC 10195 / G37) (Mycoplasmoides genitalium), this protein is Large ribosomal subunit protein uL6.